We begin with the raw amino-acid sequence, 598 residues long: Inactive metallocarboxypeptidase ECM14 (598 aa).

Residues Met1 to Ala21 form the signal peptide. A propeptide spanning residues Ile22 to Pro174 is cleaved from the precursor. Positions Asn202–Leu522 constitute a Peptidase M14 domain. 2 residues coordinate Zn(2+): His264 and Glu267. Substrate is bound by residues His264–Glu267, Arg322, and Asp339–Arg340. Cys333 and Cys356 are disulfide-bonded. The N-linked (GlcNAc...) asparagine glycan is linked to Asn349. Position 396 (His396) interacts with Zn(2+). Ser397–Tyr398 serves as a coordination point for substrate. Residues Gln539 to Arg598 form a disordered region. Over residues Asn550–Asp562 the composition is skewed to acidic residues. Positions Gly564–Asn581 are enriched in basic and acidic residues.

Belongs to the peptidase M14 family. Zn(2+) serves as cofactor.

The protein resides in the vacuole. It is found in the secreted. Its function is as follows. Inactive carboxypeptidase that may play a role in cell wall organization and biogenesis. This is Inactive metallocarboxypeptidase ECM14 (ECM14) from Ajellomyces capsulatus (strain H143) (Darling's disease fungus).